Consider the following 545-residue polypeptide: Envelope glycoprotein E (545 aa).

Residues 1–20 (MARGAGLVFFVGVWVVSCLA) form the signal peptide. Topologically, residues 21 to 414 (AAPRTSWKRV…PAPSARGPLR (394 aa)) are virion surface. The segment at 61-86 (CGPLRPSWVALWPPRRVLETVVDAAC) is interaction with gI. Asn122 carries N-linked (GlcNAc...) asparagine; by host glycosylation. A disordered region spans residues 162–206 (APVPTPTPDDYDEEDDAGVTNARRSAFPPQPPPRRPPVAPPTHPR). Sulfotyrosine; by host is present on Tyr172. The span at 179 to 188 (GVTNARRSAF) shows a compositional bias: low complexity. The segment covering 189 to 204 (PPQPPPRRPPVAPPTH) has biased composition (pro residues). The fc-binding stretch occupies residues 230–375 (APGETFGTNV…GHMTISTAAQ (146 aa)). N-linked (GlcNAc...) asparagine; by host glycosylation occurs at Asn238. Cystine bridges form between Cys266–Cys292, Cys275–Cys284, and Cys309–Cys318. Residues 386–408 (PQRQPEPVEPTRPHVRAPHPAPS) are disordered. A helical transmembrane segment spans residues 415 to 435 (LGAVLGAALLLAALGLSAWAC). The Intravirion segment spans residues 436-545 (MTCWRRRSWR…SQASYPSVLW (110 aa)). 2 short sequence motifs (internalization motif) span residues 458–461 (YIRV) and 467–470 (YADW). Residues 465 to 490 (ELYADWSSDSEGERDGSLWQDPPERP) are interaction with VP22 and UL11. The interval 470–545 (WSSDSEGERD…SQASYPSVLW (76 aa)) is disordered. Ser471 and Ser472 each carry phosphoserine; by host CK2. Residues 471 to 479 (SSDSEGERD) form an acidic region. Residues 475–491 (EGERDGSLWQDPPERPD) are compositionally biased toward basic and acidic residues. Ser498 is modified (phosphoserine).

This sequence belongs to the alphaherpesvirinae glycoprotein E family. Interacts with gI; this interaction enhances the Fc receptor function of gE. The heterodimer gE/gI interacts with the Fc part of host IgG. Interacts (via C-terminus) with VP22 tegument protein; this interaction is necessary for the recruitment of VP22 to the Golgi and its packaging into virions. Interacts (via C-terminus) with UL11 tegument protein. In terms of processing, phosphorylated on serines within the acidic cluster. Phosphorylation determines whether endocytosed viral gE traffics to the trans-Golgi network or recycles to the cell membrane. Post-translationally, N-glycosylated, and sulfated.

The protein localises to the virion membrane. It localises to the host cell membrane. The protein resides in the host cell junction. Its subcellular location is the host Golgi apparatus membrane. It is found in the host endosome membrane. In terms of biological role, in epithelial cells, the heterodimer gE/gI is required for the cell-to-cell spread of the virus, by sorting nascent virions to cell junctions. Once the virus reaches the cell junctions, virus particles can spread to adjacent cells extremely rapidly through interactions with cellular receptors that accumulate at these junctions. Implicated in basolateral spread in polarized cells. In neuronal cells, gE/gI is essential for the anterograde spread of the infection throughout the host nervous system. Together with US9, the heterodimer gE/gI is involved in the sorting and transport of viral structural components toward axon tips. Functionally, the heterodimer gE/gI serves as a receptor for the Fc part of host IgG. Dissociation of gE/gI from IgG occurs at acidic pH. May thus be involved in anti-HSV antibodies bipolar bridging, followed by intracellular endocytosis and degradation, thereby interfering with host IgG-mediated immune responses. This Human herpesvirus 2 (strain HG52) (HHV-2) protein is Envelope glycoprotein E (gE).